Consider the following 225-residue polypeptide: tRNA 2'-phosphotransferase 1 (225 aa).

A disordered region spans residues 1 to 21 (MDCETRGRGRRGRGNRNEESR).

Belongs to the KptA/TPT1 family.

The catalysed reaction is 2'-phospho-[ligated tRNA] + NAD(+) = mature tRNA + ADP-alpha-D-ribose 1'',2''-cyclic phosphate + nicotinamide. Catalyzes the last step of tRNA splicing, the transfer of the splice junction 2'-phosphate from ligated tRNA to NAD to produce ADP-ribose 1''-2'' cyclic phosphate. This Danio rerio (Zebrafish) protein is tRNA 2'-phosphotransferase 1 (trpt1).